The primary structure comprises 129 residues: MSNIPTELKYASSHEWIRKEEDGSYTVGITEHAQELLGDMVFVELPEVGDTVTAGDDCAVAESVKAASDIYAPISGEVIAVNEALEDSPELVNSDAYGEGWFFRVMPSDETEVDALLDAEGYQAVIDEE.

A Lipoyl-binding domain is found at 24–106; the sequence is SYTVGITEHA…YGEGWFFRVM (83 aa). Lysine 65 carries the post-translational modification N6-lipoyllysine.

This sequence belongs to the GcvH family. The glycine cleavage system is composed of four proteins: P, T, L and H. (R)-lipoate serves as cofactor.

Functionally, the glycine cleavage system catalyzes the degradation of glycine. The H protein shuttles the methylamine group of glycine from the P protein to the T protein. This chain is Glycine cleavage system H protein, found in Shewanella putrefaciens (strain CN-32 / ATCC BAA-453).